The sequence spans 369 residues: Phenylalanine--tRNA ligase alpha subunit (369 aa).

Glu-269 serves as a coordination point for Mg(2+).

This sequence belongs to the class-II aminoacyl-tRNA synthetase family. Phe-tRNA synthetase alpha subunit type 1 subfamily. As to quaternary structure, tetramer of two alpha and two beta subunits. Mg(2+) is required as a cofactor.

Its subcellular location is the cytoplasm. It carries out the reaction tRNA(Phe) + L-phenylalanine + ATP = L-phenylalanyl-tRNA(Phe) + AMP + diphosphate + H(+). The sequence is that of Phenylalanine--tRNA ligase alpha subunit from Brucella anthropi (strain ATCC 49188 / DSM 6882 / CCUG 24695 / JCM 21032 / LMG 3331 / NBRC 15819 / NCTC 12168 / Alc 37) (Ochrobactrum anthropi).